A 348-amino-acid polypeptide reads, in one-letter code: Calcium/calmodulin-dependent protein kinase type 1 (348 aa).

The short motif at 7-22 is the Nuclear localization signal 1 element; the sequence is RDGSGPAPNATIREKY. The Protein kinase domain occupies 22–278; that stretch reads YDFRDVLGTG…CQDALSHPWI (257 aa). ATP is bound by residues 28–36 and lysine 52; that span reads LGTGAFSKV. Positions 71-78 match the Nuclear localization signal 2 motif; sequence KVLRKLRH. The active-site Proton acceptor is aspartate 144. Threonine 179 is subject to Phosphothreonine; by ckk-1. Positions 278–318 are autoinhibitory domain; it reads ISGNTAYTHDIHGTVAVHLKKSLAKRNWKKAYNAAAAIRQL. The short motif at 288-294 is the Nuclear export sequence element; the sequence is IHGTVAV. The Nuclear localization signal 3 signature appears at 297–307; the sequence is KKSLAKRNWKK. A calmodulin-binding region spans residues 298–319; the sequence is KSLAKRNWKKAYNAAAAIRQLQ. Residues 327 to 338 show a composition bias toward polar residues; the sequence is SNRLQKQASQQQ. The segment at 327-348 is disordered; it reads SNRLQKQASQQQPEPPTPAFHA. The segment covering 339–348 has biased composition (pro residues); that stretch reads PEPPTPAFHA.

It belongs to the protein kinase superfamily. CAMK Ser/Thr protein kinase family. CaMK subfamily. In terms of assembly, interacts with importin ima-3; affinity for ima-3 is increased in the presence of Ca(2+) and calmodulin and leads to increased nuclear accumulation of cmk-1 in FLP neurons upon prolonged heat activation. It depends on Mg(2+) as a cofactor. In terms of processing, phosphorylation at Thr-179 can promote both nuclear export and import, sustaining nucleocytoplasmic shuttling. Expressed in head and tail neurons and vulval muscles. Throughout the nervous system. Detected in neurites and neuronal cell bodies. Expressed in the mechanosensory neurons, AVM and ALM, and in the interneurons, AVA, AVB and AVD. Expressed in the right and left ASE neurons where it functions cell-autonomously to control salt-avoidance learning. Expressed in FLP and AFD thermosensory neurons.

The protein localises to the nucleus. It is found in the cytoplasm. The enzyme catalyses L-seryl-[protein] + ATP = O-phospho-L-seryl-[protein] + ADP + H(+). The catalysed reaction is L-threonyl-[protein] + ATP = O-phospho-L-threonyl-[protein] + ADP + H(+). Its activity is regulated as follows. Activated by Ca(2+)/calmodulin. Binding of calmodulin results in a conformational change that generates functional binding sites for both substrate and ATP, and thus relieves autoinhibition and lowers the Km of substrate binding. Must be phosphorylated by ckk-1 to be maximally active but this does not appear to be required for activity in AFD neurons. Functionally, calcium/calmodulin-dependent protein kinase that operates in the calcium-triggered CaMKK-CaMK1 signaling cascade which results in transcriptional activation. Transcriptional activation occurs at least in part through phosphorylation of crh-1. Regulates gene expression, sensory morphology, and function of the AFD thermosensory neurons. Involved in long-term adaptation of AFD neurons to temperatures warmer than the initial acclimatized cultivation temperature. Acts in the FLP thermal nociceptors to moderate the responsiveness to noxious heat and controls neuropeptide release from FLP neurons in response to temperature elevations. Regulates the dauer decision, the decision of the larvae to enter into the alternative stress-resistant and long-lived dauer developmental stage, based on the feeding state, primarily in the AWC sensory neurons. Acts non cell-autonomously in the AWC neurons to regulate expression of the daf-28 insulin-like peptide and cell-autonomously in the ASI sensory neurons to regulate expression of the growth promoting daf-7 in a food-regulated manner. Plays a role in memory-based thermal response of an individual AFD neuron cell. Influences habituation and sensitivity to repeated mechanosensory stimuli. Involved in chemotaxis response in AWC neurons to attractant 2-heptanone, a volatile organic compound emitted by the nematode pathogenic bacterium B.nematocida B16. Acts in the ASE salt-sensing neurons to promote a type of aversive gustatory-associated learning called salt-avoidance learning via regulation of crh-1 signaling and the promotion of long-term memory formation, but is not involved in salt attraction. Represses transcription of glutamate receptor glr-1 in the nucleus basally and in response to changes in synaptic activity. This is Calcium/calmodulin-dependent protein kinase type 1 from Caenorhabditis elegans.